Here is a 256-residue protein sequence, read N- to C-terminus: Small ribosomal subunit protein eS1A (256 aa).

Position 2 is an N-acetylalanine; partial (Ala2).

The protein belongs to the eukaryotic ribosomal protein eS1 family. As to quaternary structure, component of the small ribosomal subunit. Mature ribosomes consist of a small (40S) and a large (60S) subunit. The 40S subunit contains about 33 different proteins and 1 molecule of RNA (18S). The 60S subunit contains about 49 different proteins and 3 molecules of RNA (25S, 5.8S and 5S).

The protein localises to the cytoplasm. The protein is Small ribosomal subunit protein eS1A of Scheffersomyces stipitis (strain ATCC 58785 / CBS 6054 / NBRC 10063 / NRRL Y-11545) (Yeast).